Reading from the N-terminus, the 485-residue chain is UDP-glycosyltransferase 71B2 (485 aa).

Residues Ser-287, 354–356 (APQ), 371–379 (HCGWNSTLE), and 393–396 (YAEQ) each bind UDP-alpha-D-glucose.

Belongs to the UDP-glycosyltransferase family.

Its function is as follows. Glucosyltransferase that glucosylates the cell wall inhibitor hypostatin in vivo to form a bioactive glucoside. This is UDP-glycosyltransferase 71B2 (UGT71B2) from Arabidopsis thaliana (Mouse-ear cress).